A 95-amino-acid chain; its full sequence is Small ribosomal subunit protein bS18 (95 aa).

The protein belongs to the bacterial ribosomal protein bS18 family. Part of the 30S ribosomal subunit. Forms a tight heterodimer with protein bS6.

Binds as a heterodimer with protein bS6 to the central domain of the 16S rRNA, where it helps stabilize the platform of the 30S subunit. In Rickettsia rickettsii (strain Sheila Smith), this protein is Small ribosomal subunit protein bS18.